We begin with the raw amino-acid sequence, 495 residues long: Sialin (495 aa).

The span at 1–18 (MRSPVRDLARNDGEESTD) shows a compositional bias: basic and acidic residues. Residues 1–24 (MRSPVRDLARNDGEESTDRTPLLP) form a disordered region. Over 1 to 41 (MRSPVRDLARNDGEESTDRTPLLPGAPRAEAAPVCCSARYN) the chain is Cytoplasmic. Residue Ser-3 is modified to Phosphoserine. Residues 22–23 (LL) carry the Dileucine internalization motif motif. A helical transmembrane segment spans residues 42–62 (LAILAFFGFFIVYALRVNLSV). Residues 63-109 (ALVDMVDSNTTLEDNRTSKACPEHSAPIKVHHNQTGKKYQWDAETQG) lie on the Lumenal side of the membrane. 3 N-linked (GlcNAc...) asparagine glycosylation sites follow: Asn-71, Asn-77, and Asn-95. The helical transmembrane segment at 110 to 130 (WILGSFFYGYIITQIPGGYVA) threads the bilayer. Residues 131–136 (SKIGGK) are Cytoplasmic-facing. The chain crosses the membrane as a helical span at residues 137-157 (MLLGFGILGTAVLTLFTPIAA). A topological domain (lumenal) is located at residue Asp-158. The chain crosses the membrane as a helical span at residues 159-179 (LGVGPLIVLRALEGLGEGVTF). The Cytoplasmic segment spans residues 180-200 (PAMHAMWSSWAPPLERSKLLS). The helical transmembrane segment at 201-221 (ISYAGAQLGTVISLPLSGIIC) threads the bilayer. The Lumenal segment spans residues 222–227 (YYMNWT). Residues 228–248 (YVFYFFGTIGIFWFLLWIWLV) form a helical membrane-spanning segment. The Cytoplasmic portion of the chain corresponds to 249 to 279 (SDTPQKHKRISHYEKEYILSSLRNQLSSQKS). Residues 280–300 (VPWVPILKSLPLWAIVVAHFS) form a helical membrane-spanning segment. Residues 301–328 (YNWTFYTLLTLLPTYMKEILRFNVQENG) lie on the Lumenal side of the membrane. A helical membrane pass occupies residues 329–349 (FLSSLPYLGSWLCMILSGQAA). Topologically, residues 350 to 365 (DNLRAKWNFSTLCVRR) are cytoplasmic. A helical membrane pass occupies residues 366–386 (IFSLIGMIGPAVFLVAAGFIG). The Lumenal portion of the chain corresponds to 387–391 (CDYSL). The chain crosses the membrane as a helical span at residues 392–412 (AVAFLTISTTLGGFCSSGFSI). Residues 413-423 (NHLDIAPSYAG) lie on the Cytoplasmic side of the membrane. Residues 424 to 444 (ILLGITNTFATIPGMVGPVIA) traverse the membrane as a helical segment. Over 445–457 (KSLTPDNTVGEWQ) the chain is Lumenal. Residues 458–478 (TVFYIAAAINVFGAIFFTLFA) form a helical membrane-spanning segment. Topologically, residues 479–495 (KGEVQNWALNDHHGHRH) are cytoplasmic.

It belongs to the major facilitator superfamily. Sodium/anion cotransporter family. In terms of tissue distribution, in the adult, detected in placenta, kidney and pancreas. Abundant in the endothelial cells of tumors from ovary, colon, breast and lung, but is not detected in endothelial cells from the corresponding normal tissues. Highly expressed in salivary glands and liver, with lower levels of expression in brain, spleen kidney, muscle and pancreas. Expressed in acinar cells of salivary glands (at protein level).

The protein localises to the basolateral cell membrane. It localises to the cytoplasmic vesicle. The protein resides in the secretory vesicle. It is found in the synaptic vesicle membrane. Its subcellular location is the lysosome membrane. It catalyses the reaction N-acetylneuraminate(in) + H(+)(in) = N-acetylneuraminate(out) + H(+)(out). The catalysed reaction is D-glucuronate(out) + H(+)(out) = D-glucuronate(in) + H(+)(in). The enzyme catalyses 2 nitrate(out) + H(+)(out) = 2 nitrate(in) + H(+)(in). It carries out the reaction L-aspartate(out) = L-aspartate(in). It catalyses the reaction L-glutamate(out) = L-glutamate(in). The catalysed reaction is N-acetyl-L-aspartyl-L-glutamate(out) = N-acetyl-L-aspartyl-L-glutamate(in). Functionally, multifunctional anion transporter that operates via two distinct transport mechanisms, namely proton-coupled anion cotransport and membrane potential-dependent anion transport. Electroneutral proton-coupled acidic monosaccharide symporter, with a sugar to proton stoichiometry of 1:1. Exports glucuronic acid and free sialic acid derived from sialoglycoconjugate degradation out of lysosomes, driven by outwardly directed lysosomal pH gradient. May regulate lysosome function and metabolism of sialylated conjugates that impact oligodendrocyte lineage differentiation and myelinogenesis in the central nervous system. Electrogenic proton-coupled nitrate symporter that transports nitrate ions across the basolateral membrane of salivary gland acinar cells, with nitrate to proton stoichiometry of 2:1. May contribute to nitrate clearance from serum by salivary glands, where it is further concentrated and secreted in the saliva. Uses membrane potential to drive the uptake of acidic amino acids and peptides into synaptic vesicles. Responsible for synaptic vesicular storage of L-aspartate and L-glutamate in pinealocytes as well as vesicular uptake of N-acetyl-L-aspartyl-L-glutamate neuropeptide, relevant to aspartegic-associated glutamatergic neurotransmission and activation of metabotropic receptors that inhibit subsequent transmitter release. Its function is as follows. Receptor for CM101, a polysaccharide produced by group B Streptococcus with antipathoangiogenic properties. The polypeptide is Sialin (SLC17A5) (Homo sapiens (Human)).